We begin with the raw amino-acid sequence, 281 residues long: MTKYTNADELKSLTLGQKTEYKHSYEPELLQAVPRSLNRDDLALGDELPFVGCDVWTLYELSWLNQNGLPQVAIGDVVLPATSPNLVESKSFKLYLNSFNQTKFSSWEDVTSTLIKDLSVCAGEEVMVNIHPVQAYSQQPIVDMQGECIDNQDIVIDSYEFDANYLESSTSEKMVNEVLHSHLLKSNCLITNQPDWGSVEINYEGNKIDHEKLLRYLISFRQHNEFHEQCVERIYTDIMKFCSPKSLTVFARYTRRGGLDINPFRSSHLIKPEHNLRLARQ.

87 to 89 is a substrate binding site; sequence VES. 89–90 is an NADPH binding site; it reads SK. The active-site Thioimide intermediate is Cys188. Residue Asp195 is the Proton donor of the active site. 227-228 provides a ligand contact to substrate; sequence HE. 256–257 contacts NADPH; that stretch reads RG.

It belongs to the GTP cyclohydrolase I family. QueF type 2 subfamily. Homodimer.

It is found in the cytoplasm. It carries out the reaction 7-aminomethyl-7-carbaguanine + 2 NADP(+) = 7-cyano-7-deazaguanine + 2 NADPH + 3 H(+). The protein operates within tRNA modification; tRNA-queuosine biosynthesis. Its function is as follows. Catalyzes the NADPH-dependent reduction of 7-cyano-7-deazaguanine (preQ0) to 7-aminomethyl-7-deazaguanine (preQ1). The polypeptide is NADPH-dependent 7-cyano-7-deazaguanine reductase (Aliivibrio salmonicida (strain LFI1238) (Vibrio salmonicida (strain LFI1238))).